The sequence spans 134 residues: Profilin-1 (134 aa).

Residues Cys-13 and Cys-118 are joined by a disulfide bond. The Involved in PIP2 interaction motif lies at 84–100 (AVIRGKKGSGGITIKKT). A Phosphothreonine modification is found at Thr-114.

The protein belongs to the profilin family. In terms of assembly, occurs in many kinds of cells as a complex with monomeric actin in a 1:1 ratio. Post-translationally, phosphorylated by MAP kinases.

It is found in the cytoplasm. Its subcellular location is the cytoskeleton. Its function is as follows. Binds to actin and affects the structure of the cytoskeleton. At high concentrations, profilin prevents the polymerization of actin, whereas it enhances it at low concentrations. This Olea europaea (Common olive) protein is Profilin-1.